Consider the following 436-residue polypeptide: GTPase Obg (436 aa).

The Obg domain maps to 2–160; sequence SMFLDTAKIQ…RELLLELKVL (159 aa). The OBG-type G domain maps to 161-338; it reads ADVGLVGFPS…LLDATAELLD (178 aa). Residues 167-174, 192-196, 214-217, 284-287, and 319-321 contribute to the GTP site; these read GFPSVGKS, FTTIV, DLPG, NKMD, and SSL. Ser174 and Thr194 together coordinate Mg(2+). One can recognise an OCT domain in the interval 358–436; the sequence is GFDEEAPAFE…IGKFEFEFVD (79 aa).

It belongs to the TRAFAC class OBG-HflX-like GTPase superfamily. OBG GTPase family. In terms of assembly, monomer. Mg(2+) is required as a cofactor.

Its subcellular location is the cytoplasm. Its function is as follows. An essential GTPase which binds GTP, GDP and possibly (p)ppGpp with moderate affinity, with high nucleotide exchange rates and a fairly low GTP hydrolysis rate. Plays a role in control of the cell cycle, stress response, ribosome biogenesis and in those bacteria that undergo differentiation, in morphogenesis control. In Streptococcus sanguinis (strain SK36), this protein is GTPase Obg.